The chain runs to 640 residues: Chaperone protein HtpG (640 aa).

The tract at residues 1–343 is a; substrate-binding; sequence MQTAENVEHL…SNDLPLNVSR (343 aa). Positions 344-564 are b; that stretch reads EILQESKDID…THDMSGNLGR (221 aa). The c stretch occupies residues 565 to 640; that stretch reads LLKSAGQKVP…LLLQNILSGK (76 aa).

Belongs to the heat shock protein 90 family. In terms of assembly, homodimer.

The protein localises to the cytoplasm. In terms of biological role, molecular chaperone. Has ATPase activity. This is Chaperone protein HtpG from Nitrosomonas eutropha (strain DSM 101675 / C91 / Nm57).